Reading from the N-terminus, the 513-residue chain is Histidine ammonia-lyase (513 aa).

The segment at residues 143-145 (ASG) is a cross-link (5-imidazolinone (Ala-Gly)). Ser-144 carries the 2,3-didehydroalanine (Ser) modification.

This sequence belongs to the PAL/histidase family. Contains an active site 4-methylidene-imidazol-5-one (MIO), which is formed autocatalytically by cyclization and dehydration of residues Ala-Ser-Gly.

It is found in the cytoplasm. The catalysed reaction is L-histidine = trans-urocanate + NH4(+). It functions in the pathway amino-acid degradation; L-histidine degradation into L-glutamate; N-formimidoyl-L-glutamate from L-histidine: step 1/3. The polypeptide is Histidine ammonia-lyase (Xanthomonas axonopodis pv. citri (strain 306)).